Reading from the N-terminus, the 414-residue chain is L-cysteine:1D-myo-inositol 2-amino-2-deoxy-alpha-D-glucopyranoside ligase (414 aa).

Cysteine 44 contacts Zn(2+). L-cysteinyl-5'-AMP contacts are provided by residues 44-47 (CGIT), threonine 59, and 82-84 (NIT). A 'HIGH' region motif is present at residues 46–56 (ITPYDSTHLGH). A 'ERGGDP' region motif is present at residues 188 to 193 (ERGGDP). Tryptophan 228 provides a ligand contact to L-cysteinyl-5'-AMP. Cysteine 232 provides a ligand contact to Zn(2+). 250–252 (GSD) contacts L-cysteinyl-5'-AMP. Histidine 257 serves as a coordination point for Zn(2+). Isoleucine 284 provides a ligand contact to L-cysteinyl-5'-AMP. The 'KMSKS' region signature appears at 290–294 (KMSKS).

This sequence belongs to the class-I aminoacyl-tRNA synthetase family. MshC subfamily. In terms of assembly, monomer. Zn(2+) serves as cofactor.

The catalysed reaction is 1D-myo-inositol 2-amino-2-deoxy-alpha-D-glucopyranoside + L-cysteine + ATP = 1D-myo-inositol 2-(L-cysteinylamino)-2-deoxy-alpha-D-glucopyranoside + AMP + diphosphate + H(+). In terms of biological role, catalyzes the ATP-dependent condensation of GlcN-Ins and L-cysteine to form L-Cys-GlcN-Ins. The polypeptide is L-cysteine:1D-myo-inositol 2-amino-2-deoxy-alpha-D-glucopyranoside ligase (mshC) (Corynebacterium diphtheriae (strain ATCC 700971 / NCTC 13129 / Biotype gravis)).